The chain runs to 72 residues: MRQEIHPKYTEVTVTCSCGNTFVTRSTAGKKEMNIDICSECHPFYTGKQRIVDTAGRVDKFKKRFGGMKKYN.

Zn(2+) is bound by residues Cys16, Cys18, Cys38, and Cys41.

The protein belongs to the bacterial ribosomal protein bL31 family. Type A subfamily. Part of the 50S ribosomal subunit. Zn(2+) serves as cofactor.

In terms of biological role, binds the 23S rRNA. The chain is Large ribosomal subunit protein bL31 from Francisella tularensis subsp. holarctica (strain LVS).